The primary structure comprises 63 residues: SPbeta prophage-derived uncharacterized protein YomP (63 aa).

The polypeptide is SPbeta prophage-derived uncharacterized protein YomP (yomP) (Bacillus subtilis (strain 168)).